We begin with the raw amino-acid sequence, 430 residues long: Adenylosuccinate synthetase (430 aa).

GTP-binding positions include glycine 12–lysine 18 and glycine 40–threonine 42. The Proton acceptor role is filled by aspartate 13. Mg(2+)-binding residues include aspartate 13 and glycine 40. Residues aspartate 13–lysine 16, asparagine 38–histidine 41, threonine 130, arginine 144, glutamine 224, threonine 239, and arginine 303 each bind IMP. The Proton donor role is filled by histidine 41. Substrate is bound at residue alanine 299 to arginine 305. GTP is bound by residues arginine 305, lysine 331–aspartate 333, and serine 413–glycine 415.

Belongs to the adenylosuccinate synthetase family. As to quaternary structure, homodimer. Requires Mg(2+) as cofactor.

The protein resides in the cytoplasm. The catalysed reaction is IMP + L-aspartate + GTP = N(6)-(1,2-dicarboxyethyl)-AMP + GDP + phosphate + 2 H(+). It functions in the pathway purine metabolism; AMP biosynthesis via de novo pathway; AMP from IMP: step 1/2. Plays an important role in the de novo pathway of purine nucleotide biosynthesis. Catalyzes the first committed step in the biosynthesis of AMP from IMP. The polypeptide is Adenylosuccinate synthetase (Trichlorobacter lovleyi (strain ATCC BAA-1151 / DSM 17278 / SZ) (Geobacter lovleyi)).